A 175-amino-acid polypeptide reads, in one-letter code: Adenine phosphoribosyltransferase (175 aa).

The protein belongs to the purine/pyrimidine phosphoribosyltransferase family. Homodimer.

Its subcellular location is the cytoplasm. The enzyme catalyses AMP + diphosphate = 5-phospho-alpha-D-ribose 1-diphosphate + adenine. The protein operates within purine metabolism; AMP biosynthesis via salvage pathway; AMP from adenine: step 1/1. Functionally, catalyzes a salvage reaction resulting in the formation of AMP, that is energically less costly than de novo synthesis. The polypeptide is Adenine phosphoribosyltransferase (Synechococcus sp. (strain CC9902)).